The sequence spans 208 residues: Probable nicotinate-nucleotide adenylyltransferase (208 aa).

The protein belongs to the NadD family.

It catalyses the reaction nicotinate beta-D-ribonucleotide + ATP + H(+) = deamido-NAD(+) + diphosphate. Its pathway is cofactor biosynthesis; NAD(+) biosynthesis; deamido-NAD(+) from nicotinate D-ribonucleotide: step 1/1. Catalyzes the reversible adenylation of nicotinate mononucleotide (NaMN) to nicotinic acid adenine dinucleotide (NaAD). This Symbiobacterium thermophilum (strain DSM 24528 / JCM 14929 / IAM 14863 / T) protein is Probable nicotinate-nucleotide adenylyltransferase.